An 882-amino-acid polypeptide reads, in one-letter code: Valine--tRNA ligase (882 aa).

Residues 45–55 (PNVTGSLHIGH) carry the 'HIGH' region motif. The 'KMSKS' region motif lies at 525–529 (KFSKS). An ATP-binding site is contributed by K528. Positions 812–881 (EGLIDVAKEK…VLKKGIQNLA (70 aa)) form a coiled coil.

Belongs to the class-I aminoacyl-tRNA synthetase family. ValS type 1 subfamily. In terms of assembly, monomer.

It localises to the cytoplasm. The catalysed reaction is tRNA(Val) + L-valine + ATP = L-valyl-tRNA(Val) + AMP + diphosphate. Catalyzes the attachment of valine to tRNA(Val). As ValRS can inadvertently accommodate and process structurally similar amino acids such as threonine, to avoid such errors, it has a 'posttransfer' editing activity that hydrolyzes mischarged Thr-tRNA(Val) in a tRNA-dependent manner. The protein is Valine--tRNA ligase of Leptospira interrogans serogroup Icterohaemorrhagiae serovar copenhageni (strain Fiocruz L1-130).